Reading from the N-terminus, the 308-residue chain is UDP-N-acetylenolpyruvoylglucosamine reductase (308 aa).

The 166-residue stretch at 35-200 (RVGGPAQVLF…TSARFRGEPM (166 aa)) folds into the FAD-binding PCMH-type domain. The active site involves R180. A compositionally biased stretch (basic and acidic residues) spans 211–226 (EVQRHRETAQPVREKT). The segment at 211-236 (EVQRHRETAQPVREKTGGSTFKNPPG) is disordered. Residue S229 is the Proton donor of the active site. E299 is a catalytic residue.

Belongs to the MurB family. Requires FAD as cofactor.

Its subcellular location is the cytoplasm. The catalysed reaction is UDP-N-acetyl-alpha-D-muramate + NADP(+) = UDP-N-acetyl-3-O-(1-carboxyvinyl)-alpha-D-glucosamine + NADPH + H(+). It functions in the pathway cell wall biogenesis; peptidoglycan biosynthesis. Its function is as follows. Cell wall formation. In Rhodopseudomonas palustris (strain BisB18), this protein is UDP-N-acetylenolpyruvoylglucosamine reductase.